The sequence spans 78 residues: Large ribosomal subunit protein bL28 (78 aa).

The disordered stretch occupies residues Met1–Arg23.

The protein belongs to the bacterial ribosomal protein bL28 family.

This Picosynechococcus sp. (strain ATCC 27264 / PCC 7002 / PR-6) (Agmenellum quadruplicatum) protein is Large ribosomal subunit protein bL28.